Reading from the N-terminus, the 870-residue chain is Lon protease (870 aa).

One can recognise a Lon N-terminal domain in the interval 1–270 (MPTNSYRFLV…KLYEHIHTFA (270 aa)). 454–461 (GPPGTGKT) contacts ATP. Residues 691–870 (SPQIGTVTGL…YQQIYDFIFK (180 aa)) form the Lon proteolytic domain. Residues Ser-777 and Lys-820 contribute to the active site.

This sequence belongs to the peptidase S16 family. As to quaternary structure, homohexamer. Organized in a ring with a central cavity.

It is found in the cytoplasm. It carries out the reaction Hydrolysis of proteins in presence of ATP.. In terms of biological role, ATP-dependent serine protease that mediates the selective degradation of mutant and abnormal proteins as well as certain short-lived regulatory proteins. Required for cellular homeostasis and for survival from DNA damage and developmental changes induced by stress. Degrades polypeptides processively to yield small peptide fragments that are 5 to 10 amino acids long. Binds to DNA in a double-stranded, site-specific manner. This is Lon protease from Mesomycoplasma hyopneumoniae (strain 232) (Mycoplasma hyopneumoniae).